Reading from the N-terminus, the 225-residue chain is Polyadenylate-binding protein 2 (225 aa).

Residues 1–36 (MADEDISLNEDQLLESMEETNGEQETEIVTETEEEG) are compositionally biased toward acidic residues. The interval 1-42 (MADEDISLNEDQLLESMEETNGEQETEIVTETEEEGSMQIDP) is disordered. A coiled-coil region spans residues 14 to 74 (LESMEETNGE…QSEVDKQMAG (61 aa)). An RRM domain is found at 96–173 (RSVYVGNVDY…RQIKVMSKRT (78 aa)).

The protein localises to the nucleus. It is found in the cytoplasm. Its function is as follows. Involved in the 3'-end formation of mRNA precursors (pre-mRNA) by the addition of a poly(A) tail of 200-250 nt to the upstream cleavage product. Stimulates poly(A) polymerase (PAPOLA) conferring processivity on the poly(A) tail elongation reaction and also controls the poly(A) tail length. Increases the affinity of poly(A) polymerase for RNA. Binds to poly(A) and to poly(G) with high affinity. May protect the poly(A) tail from degradation. The protein is Polyadenylate-binding protein 2 of Drosophila pseudoobscura pseudoobscura (Fruit fly).